The chain runs to 115 residues: Large ribosomal subunit protein P2z (115 aa).

The disordered stretch occupies residues 62–115 (LASVPSGGGGGVAVASATSGGGGGGGAPAAESKKEEKKEEKEESDDDMGFSLFE). A compositionally biased stretch (basic and acidic residues) spans 92-102 (ESKKEEKKEEK). Ser105 is modified (phosphoserine).

The protein belongs to the eukaryotic ribosomal protein P1/P2 family. In terms of assembly, P1 and P2 exist as dimers at the large ribosomal subunit. Phosphorylated.

Functionally, plays an important role in the elongation step of protein synthesis. In Arabidopsis thaliana (Mouse-ear cress), this protein is Large ribosomal subunit protein P2z (RPP2A).